A 286-amino-acid chain; its full sequence is Ribosome-inactivating protein beta-momorcharin (286 aa).

The first 23 residues, 1–23, serve as a signal peptide directing secretion; sequence MVKCLLLSFLIIAIFIGVPTAKG. Asn74 carries an N-linked (GlcNAc...) asparagine glycan. Catalysis depends on residues Tyr93, Tyr132, Glu181, and Arg184.

Belongs to the ribosome-inactivating protein family. Type 1 RIP subfamily. In terms of processing, bound to a branched hexasaccharide.

It catalyses the reaction Endohydrolysis of the N-glycosidic bond at one specific adenosine on the 28S rRNA.. Its function is as follows. Irreversibly relaxes supercoiled DNA and catalyzes double-stranded breakage. Also acts as a ribosome inactivating protein. In Momordica charantia (Bitter gourd), this protein is Ribosome-inactivating protein beta-momorcharin (MAP30).